Reading from the N-terminus, the 470-residue chain is Cysteine--tRNA ligase (470 aa).

Cys28 lines the Zn(2+) pocket. A 'HIGH' region motif is present at residues 30-40 (PTVYNYIHIGN). Residues Cys212, His237, and Glu241 each coordinate Zn(2+). The 'KMSKS' region signature appears at 271–275 (KMSKS). An ATP-binding site is contributed by Lys274.

It belongs to the class-I aminoacyl-tRNA synthetase family. In terms of assembly, monomer. It depends on Zn(2+) as a cofactor.

The protein localises to the cytoplasm. It catalyses the reaction tRNA(Cys) + L-cysteine + ATP = L-cysteinyl-tRNA(Cys) + AMP + diphosphate. The chain is Cysteine--tRNA ligase from Ligilactobacillus salivarius (strain UCC118) (Lactobacillus salivarius).